A 238-amino-acid chain; its full sequence is Beta-glucanase (238 aa).

The first 26 residues, 1–26, serve as a signal peptide directing secretion; it reads MMKKKSWFTLMITGVISLFFSVSAFA. One can recognise a GH16 domain in the interval 29 to 238; it reads VFWEPLSYFN…EYDWVKYTSN (210 aa). Cysteine 56 and cysteine 85 are oxidised to a cystine. Glutamate 129 functions as the Nucleophile in the catalytic mechanism. The active-site Proton donor is the glutamate 133.

It belongs to the glycosyl hydrolase 16 family.

The enzyme catalyses Hydrolysis of (1-&gt;4)-beta-D-glucosidic linkages in beta-D-glucans containing (1-&gt;3)- and (1-&gt;4)-bonds.. The polypeptide is Beta-glucanase (gluB) (Paenibacillus polymyxa (Bacillus polymyxa)).